Reading from the N-terminus, the 132-residue chain is Small ribosomal subunit protein uS8 (132 aa).

It belongs to the universal ribosomal protein uS8 family. As to quaternary structure, part of the 30S ribosomal subunit. Contacts proteins S5 and S12.

In terms of biological role, one of the primary rRNA binding proteins, it binds directly to 16S rRNA central domain where it helps coordinate assembly of the platform of the 30S subunit. This chain is Small ribosomal subunit protein uS8, found in Geotalea daltonii (strain DSM 22248 / JCM 15807 / FRC-32) (Geobacter daltonii).